Here is a 357-residue protein sequence, read N- to C-terminus: Uroporphyrinogen decarboxylase (357 aa).

Substrate-binding positions include 27 to 31 (RQAGR), D77, Y154, S209, and H330.

It belongs to the uroporphyrinogen decarboxylase family. As to quaternary structure, homodimer.

Its subcellular location is the cytoplasm. It carries out the reaction uroporphyrinogen III + 4 H(+) = coproporphyrinogen III + 4 CO2. The protein operates within porphyrin-containing compound metabolism; protoporphyrin-IX biosynthesis; coproporphyrinogen-III from 5-aminolevulinate: step 4/4. Catalyzes the decarboxylation of four acetate groups of uroporphyrinogen-III to yield coproporphyrinogen-III. The protein is Uroporphyrinogen decarboxylase of Acinetobacter baumannii (strain ATCC 17978 / DSM 105126 / CIP 53.77 / LMG 1025 / NCDC KC755 / 5377).